Consider the following 693-residue polypeptide: Adhesion G-protein coupled receptor G1 (693 aa).

An N-terminal signal peptide occupies residues 1 to 25 (MTPQSLLQTTLFLLSLLFLVQGAHG). Heparin is bound at residue 26–33 (RGHREDFR). Residues 26 to 401 (RGHREDFRFC…SVEVDAVHKH (376 aa)) are Extracellular-facing. Cystine bridges form between C35/C91 and C121/C177. 3 N-linked (GlcNAc...) asparagine glycosylation sites follow: N39, N148, and N171. Residue 190 to 200 (LKHPQKASRRP) coordinates heparin. The region spanning 224–395 (DMVSFEEDRI…AVLMVSSVEV (172 aa)) is the GAIN-B domain. N-linked (GlcNAc...) asparagine glycosylation is found at N234, N303, N324, and N341. Cystine bridges form between C346–C377 and C366–C379. Residues 346–395 (CVFWVEDPTLSSPGHWSSAGCETVRRETQTSCFCNHLTYFAVLMVSSVEV) are GPS. Residues 384-397 (YFAVLMVSSVEVDA) form a stachel region. Residues 402-424 (YLSLLSYVGCVVSALACLVTIAA) form a helical membrane-spanning segment. The Cytoplasmic segment spans residues 425–437 (YLCSRVPLPCRRK). A helical membrane pass occupies residues 438–460 (PRDYTIKVHMNLLLAVFLLDTSF). Over 461 to 465 (LLSEP) the chain is Extracellular. Residues 466-495 (VALTGSEAGCRASAIFLHFSLLTCLSWMGL) traverse the membrane as a helical segment. C475 and C562 form a disulfide bridge. Topologically, residues 496-510 (EGYNLYRLVVEVFGT) are cytoplasmic. Residues 511-533 (YVPGYLLKLSAMGWGFPIFLVTL) traverse the membrane as a helical segment. The Extracellular segment spans residues 534–562 (VALVDVDNYGPIILAVHRTPEGVIYPSMC). The chain crosses the membrane as a helical span at residues 563-588 (WIRDSLVSYITNLGLFSLVFLFNMAM). Residues 589–602 (LATMVVQILRLRPH) are Cytoplasmic-facing. The helical transmembrane segment at 603 to 624 (TQKWSHVLTLLGLSLVLGLPWA) threads the bilayer. Residues 625-628 (LIFF) are Extracellular-facing. The chain crosses the membrane as a helical span at residues 629 to 654 (SFASGTFQLVVLYLFSIITSFQGFLI). At 655–693 (FIWYWSMRLQARGGPSPLKSNSDSARLPISSGSTSSSRI) the chain is on the cytoplasmic side. The tract at residues 670 to 693 (SPLKSNSDSARLPISSGSTSSSRI) is disordered. A compositionally biased stretch (low complexity) spans 684–693 (SSGSTSSSRI).

Belongs to the G-protein coupled receptor 2 family. LN-TM7 subfamily. Heterodimer of 2 chains generated by proteolytic processing; the large extracellular N-terminal fragment (ADGRG1 NT) and the membrane-bound C-terminal fragment (ADGRG1-CT) predominantly remain associated and non-covalently linked. ADGRG1 NT self-associates in a trans-trans manner; the homophilic interaction enhances receptor signaling. Interacts with TGM2. Interacts with heparin; leading to the reduction of ADGRG1 shedding. Interacts with COL3A1. Part of a GPCR-tetraspanin complex at least consisting of ADGRG1, CD81, eventually CD9, and GNA11 in which CD81 is enhancing the association of ADGRG1 with GNA11. Autoproteolytically cleaved into 2 fragments; the large extracellular N-terminal fragment (ADGRG1 NT) and the membrane-bound C-terminal fragment (ADGRG1 CT) predominantly remain associated and non-covalently linked. Shedding to yield the secreted ADGRG1 N-terminal fragment seems to involve metalloprotease(s). Post-translationally, N-glycosylated. Contains sialic acid residues. In terms of processing, ubiquitinated. Undergoes polyubiquitination upon activation. In terms of tissue distribution, widely distributed with highest levels found in thyroid gland, brain and heart. Expressed in a great number of tumor cells. Expression is down-regulated in different tumors from highly metastatic cells.

It is found in the cell membrane. It localises to the secreted. The protein resides in the membrane raft. Forms a heterodimer of 2 chains generated by proteolytic processing that remain associated through non-covalent interactions mediated by the GAIN-B domain. In the inactivated receptor, the Stachel sequence (also named stalk) is embedded in the GAIN-B domain, where it adopts a beta-strand conformation. On activation, the Stachel moves into the 7 transmembrane region and adopts a twisted hook-shaped configuration that forms contacts within the receptor, leading to coupling of a G-alpha protein, which activates signaling. The cleaved GAIN-B and N-terminal domains can then dissociate from the rest of the receptor. Functionally, adhesion G-protein coupled receptor (aGPCR) for steroid hormone 17alpha-hydroxypregnenolone (17-OH), which is involved in cell adhesion and cell-cell interactions. Ligand binding causes a conformation change that triggers signaling via guanine nucleotide-binding proteins (G proteins) and modulates the activity of downstream effectors, such as RhoA pathway. ADGRG1 is coupled to G(12) and/or G(13) G proteins (GNA12 and GNA13, respectively) and mediates the activation Rho small GTPases. Acts as a potent suppressor of ferroptosis: binding to 17-OH-binding initiates signaling that down-regulates CD36 and alleviates ferroptosis-induced liver injury. Ligand-binding also induces cell adhesion activity via association with proteins such as collagen III/COL3A1 and TGM2. Mediates cell matrix adhesion in developing neurons and hematopoietic stem cells. Involved in cortical development, specifically in maintenance of the pial basement membrane integrity and in cortical lamination: association with COL3A1 in the developing brain inhibits neuronal migration via activation of the RhoA pathway. Together with TGM2, acts as a regulator of myelination and myelin repair in oligodendrocyte precursor cells. Acts as a hemostatic sensor of shear force: G protein-coupled receptor signaling is activated in response to shear force in platelets, promoting G(13) G protein signaling, and platelet shape change and aggregation in a COL3A1-dependent manner. Acts as an inhibitor of VEGFA production thereby inhibiting angiogenesis through a signaling pathway mediated by PRKCA. Plays a role in the maintenance of hematopoietic stem cells in bone marrow niche. Plays an essential role in testis development. In Homo sapiens (Human), this protein is Adhesion G-protein coupled receptor G1.